The chain runs to 231 residues: Cilia- and flagella-associated protein 299 (231 aa).

It is found in the cytoplasm. Its subcellular location is the nucleus. May be involved in spermatogenesis. This Bos taurus (Bovine) protein is Cilia- and flagella-associated protein 299.